The sequence spans 191 residues: MPDALPPCSILILAGGRGQRMGGRDKGLVDWQGEPLIAHVHRVVRPLSDDLVISCNRNQAAYRPYADRLVGDAEADFPGPLAGVIAGLRVARHGWVVVLACDAPLVDRELIEGLLRLAVTGNSAAMVRQGGFWQPMFSVLPKRVLPVLEQAWAAGERSLQKALLREAVQGLECAESDRRLSNFNSPDRLQD.

Residues 13-15 (LAG), lysine 26, aspartate 72, and aspartate 102 each bind GTP. Residue aspartate 102 coordinates Mg(2+).

This sequence belongs to the MobA family. As to quaternary structure, monomer. Mg(2+) is required as a cofactor.

It localises to the cytoplasm. The catalysed reaction is Mo-molybdopterin + GTP + H(+) = Mo-molybdopterin guanine dinucleotide + diphosphate. In terms of biological role, transfers a GMP moiety from GTP to Mo-molybdopterin (Mo-MPT) cofactor (Moco or molybdenum cofactor) to form Mo-molybdopterin guanine dinucleotide (Mo-MGD) cofactor. The protein is Molybdenum cofactor guanylyltransferase of Pseudomonas putida (Arthrobacter siderocapsulatus).